We begin with the raw amino-acid sequence, 111 residues long: Aspartate 1-decarboxylase (111 aa).

S25 (schiff-base intermediate with substrate; via pyruvic acid) is an active-site residue. The residue at position 25 (S25) is a Pyruvic acid (Ser). T57 lines the substrate pocket. The active-site Proton donor is the Y58. 73–75 (GPA) lines the substrate pocket.

This sequence belongs to the PanD family. Heterooctamer of four alpha and four beta subunits. Pyruvate serves as cofactor. In terms of processing, is synthesized initially as an inactive proenzyme, which is activated by self-cleavage at a specific serine bond to produce a beta-subunit with a hydroxyl group at its C-terminus and an alpha-subunit with a pyruvoyl group at its N-terminus.

It localises to the cytoplasm. The catalysed reaction is L-aspartate + H(+) = beta-alanine + CO2. Its pathway is cofactor biosynthesis; (R)-pantothenate biosynthesis; beta-alanine from L-aspartate: step 1/1. Catalyzes the pyruvoyl-dependent decarboxylation of aspartate to produce beta-alanine. The polypeptide is Aspartate 1-decarboxylase (Francisella tularensis subsp. novicida (strain U112)).